Reading from the N-terminus, the 68-residue chain is Conotoxin Cal14.13b (68 aa).

Positions 1–20 are cleaved as a signal peptide; that stretch reads MKLCVVIVLLMLAMPFNGGE. A propeptide spanning residues 21–68 is cleaved from the precursor; that stretch reads ASRFFNQHARSQRSGMKTRGIWCDPPCPEGETCRGGECSDEFNGDMGR. The residue at position 66 (Met-66) is a Methionine amide.

Post-translationally, contains 2 disulfide bonds. As to expression, expressed by the venom duct.

Its subcellular location is the secreted. Functionally, probable neurotoxin with unknown target. Possibly targets ion channels. In Californiconus californicus (California cone), this protein is Conotoxin Cal14.13b.